Reading from the N-terminus, the 436-residue chain is ATP-dependent protease ATPase subunit HslU (436 aa).

ATP contacts are provided by residues isoleucine 19, 61-65, aspartate 249, glutamate 314, and arginine 386; that span reads GVGKT.

Belongs to the ClpX chaperone family. HslU subfamily. As to quaternary structure, a double ring-shaped homohexamer of HslV is capped on each side by a ring-shaped HslU homohexamer. The assembly of the HslU/HslV complex is dependent on binding of ATP.

The protein localises to the cytoplasm. In terms of biological role, ATPase subunit of a proteasome-like degradation complex; this subunit has chaperone activity. The binding of ATP and its subsequent hydrolysis by HslU are essential for unfolding of protein substrates subsequently hydrolyzed by HslV. HslU recognizes the N-terminal part of its protein substrates and unfolds these before they are guided to HslV for hydrolysis. This Bartonella tribocorum (strain CIP 105476 / IBS 506) protein is ATP-dependent protease ATPase subunit HslU.